Here is a 224-residue protein sequence, read N- to C-terminus: Ribose-5-phosphate isomerase A (224 aa).

Substrate contacts are provided by residues 32 to 35 (TGST), 85 to 88 (DGAD), and 98 to 101 (KGGG). Glutamate 107 acts as the Proton acceptor in catalysis. Lysine 125 lines the substrate pocket.

It belongs to the ribose 5-phosphate isomerase family. As to quaternary structure, homodimer.

The catalysed reaction is aldehydo-D-ribose 5-phosphate = D-ribulose 5-phosphate. It functions in the pathway carbohydrate degradation; pentose phosphate pathway; D-ribose 5-phosphate from D-ribulose 5-phosphate (non-oxidative stage): step 1/1. Its function is as follows. Catalyzes the reversible conversion of ribose-5-phosphate to ribulose 5-phosphate. In Pseudomonas entomophila (strain L48), this protein is Ribose-5-phosphate isomerase A.